The following is a 1255-amino-acid chain: Structural polyprotein (1255 aa).

The interval 1–33 (MFPFQPMYPMQPMPYRNPFAAPRRPWFPRTDPF) is necessary for nucleocapsid assembly and virus assembly. The interval 33–68 (FLAMQVQELTRSMANLTFKQRRDAPPEGPPAKKPKR) is host transcription inhibition. A Supraphysiological nuclear export signal motif is present at residues 41-48 (LTRSMANL). A disordered region spans residues 44-119 (SMANLTFKQR…KKPGKRQRMV (76 aa)). Residues 64 to 68 (KKPKR) carry the Nuclear localization signal motif. Positions 80 to 92 (GKKKKNQGKKKAK) are enriched in basic residues. The interval 91–127 (AKTGPPNPKAQSGNKKKPNKKPGKRQRMVMKLESDKT) is binding to the viral RNA. Thr93 bears the Phosphothreonine mark. Over residues 104 to 118 (NKKKPNKKPGKRQRM) the composition is skewed to basic residues. Residues 112 to 126 (PGKRQRMVMKLESDK) are ribosome-binding. Ser124 carries the post-translational modification Phosphoserine. Residues 126–275 (KTFPIMLEGK…KYTPENCEQW (150 aa)) form the Peptidase S3 domain. At Thr127 the chain carries Phosphothreonine. Residue His152 is the Charge relay system of the active site. Residues 168-173 (KKASKY) form an interaction with spike glycoprotein E2 region. Catalysis depends on charge relay system residues Asp174 and Ser226. Residues 260–264 (EKGVT) are interaction with spike glycoprotein E2. Positions 276–287 (SLVTTMCLLANV) are functions as an uncleaved signal peptide for the precursor of protein E3/E2. At 276–701 (SLVTTMCLLA…HYYHRYPMST (426 aa)) the chain is on the extracellular side. 7 disulfide bridges follow: Cys282/Cys291, Cys353/Cys457, Cys356/Cys361, Cys424/Cys438, Cys485/Cys600, Cys534/Cys560, and Cys536/Cys554. An N-linked (GlcNAc...) asparagine; by host glycan is attached at Asn286. Asn652 is a glycosylation site (N-linked (GlcNAc...) asparagine; by host). A helical membrane pass occupies residues 702–722 (ILGLSICAAIVTVSVAASTWL). At 723–757 (FCKSRVSCLTPYRLTPNARMPLCLAVLCCARTARA) the chain is on the cytoplasmic side. Residues 725–729 (KSRVS) form an interaction with the capsid protein region. S-palmitoyl cysteine; by host attachment occurs at residues Cys730, Cys750, and Cys751. A transient transmembrane before p62-6K protein processing region spans residues 730-750 (CLTPYRLTPNARMPLCLAVLC). An intrachain disulfide couples Cys730 to Cys751. Residues 758-769 (ETTWESLDHLWN) lie on the Extracellular side of the membrane. A helical membrane pass occupies residues 770-790 (NNQQMFWIQLLIPLAALIVVT). Position 791 (Arg791) is a topological domain, cytoplasmic. A helical transmembrane segment spans residues 792–812 (LLKCVCCVVPFLVVAGAAGAG). The Extracellular portion of the chain corresponds to 813-1225 (AYEHATTMPS…SKTAWTWLTS (413 aa)). 4 disulfides stabilise this stretch: Cys862–Cys927, Cys875–Cys907, Cys876–Cys909, and Cys881–Cys891. The interval 897–914 (VYPFMWGGAYCFCDTENT) is E1 fusion peptide loop. N-linked (GlcNAc...) asparagine; by host glycosylation is found at Asn947 and Asn1083. 4 disulfides stabilise this stretch: Cys1072/Cys1084, Cys1114/Cys1189, Cys1119/Cys1193, and Cys1141/Cys1183. Residues 1226–1246 (LLGGSAVIIIIGLVLATIVAM) form a helical membrane-spanning segment. At 1247 to 1255 (YVLTNQKHN) the chain is on the cytoplasmic side.

Homodimer. Homomultimer. Interacts with host karyopherin KPNA4; this interaction allows the nuclear import of the viral capsid protein. Interacts with spike glycoprotein E2. Interacts with host IRAK1; the interaction leads to inhibition of IRAK1-dependent signaling. Part of a tetrameric complex composed of host CRM1, host importin alpha/beta dimer and the viral capsid; this complex blocks the receptor-mediated transport through the nuclear pore. Interacts with host phosphatase PPP1CA; this interaction dephosphorylates the capsid protein, which increases its ability to bind to the viral genome. As to quaternary structure, the precursor of protein E3/E2 and E1 form a heterodimer shortly after synthesis. In terms of assembly, interacts with spike glycoprotein E2. The precursor of protein E3/E2 and E1 form a heterodimer shortly after synthesis. Processing of the precursor of protein E3/E2 into E2 and E3 results in a heterodimer of the spike glycoproteins E2 and E1. Spike at virion surface are constituted of three E2-E1 heterodimers. After target cell attachment and endocytosis, E1 change conformation to form homotrimers. Interacts with 6K protein. Interacts with host LDLRAD3; this interaction mediates viral entry to the host cell. Interacts with spike glycoprotein E1. Processing of the precursor of protein E3/E2 into E2 and E3 results in a heterodimer of the spike glycoproteins E2 and E1. Spike at virion surface are constituted of a trimer of E2-E1 heterodimers. Interacts with 6K protein. Interacts with host LDLRAD3; this interaction mediates viral entry to the host cell. As to quaternary structure, oligomer. Interacts with spike glycoprotein E1. Interacts with spike glycoprotein E2. In terms of processing, structural polyprotein: Specific enzymatic cleavages in vivo yield mature proteins. Capsid protein is auto-cleaved during polyprotein translation, unmasking a signal peptide at the N-terminus of the precursor of E3/E2. The remaining polyprotein is then targeted to the host endoplasmic reticulum, where host signal peptidase cleaves it into pE2, 6K and E1 proteins. pE2 is further processed to mature E3 and E2 by host furin in trans-Golgi vesicle. Post-translationally, phosphorylated on serine and threonine residues. Palmitoylated via thioester bonds. These palmitoylations may induce disruption of the C-terminus transmembrane. This would result in the reorientation of E2 C-terminus from lumenal to cytoplasmic side. In terms of processing, N-glycosylated. Post-translationally, palmitoylated via thioester bonds.

The protein localises to the virion. Its subcellular location is the host cytoplasm. It localises to the host cell membrane. It is found in the host nucleus. The protein resides in the virion membrane. The protein localises to the host Golgi apparatus. Its subcellular location is the host trans-Golgi network. It localises to the host endoplasmic reticulum. It catalyses the reaction Autocatalytic release of the core protein from the N-terminus of the togavirus structural polyprotein by hydrolysis of a -Trp-|-Ser- bond.. Forms an icosahedral capsid with a T=4 symmetry composed of 240 copies of the capsid protein surrounded by a lipid membrane through which penetrate 80 spikes composed of trimers of E1-E2 heterodimers. The capsid protein binds to the viral RNA genome at a site adjacent to a ribosome binding site for viral genome translation following genome release. Possesses a protease activity that results in its autocatalytic cleavage from the nascent structural protein. Following its self-cleavage, the capsid protein transiently associates with ribosomes, and within several minutes the protein binds to viral RNA and rapidly assembles into icosahedric core particles. The resulting nucleocapsid eventually associates with the cytoplasmic domain of the spike glycoprotein E2 at the cell membrane, leading to budding and formation of mature virions. In case of infection, new virions attach to target cells and after clathrin-mediated endocytosis their membrane fuses with the host endosomal membrane. This leads to the release of the nucleocapsid into the cytoplasm, followed by an uncoating event necessary for the genomic RNA to become accessible. The uncoating might be triggered by the interaction of capsid proteins with ribosomes. Binding of ribosomes would release the genomic RNA since the same region is genomic RNA-binding and ribosome-binding. Specifically inhibits interleukin-1 receptor-associated kinase 1/IRAK1-dependent signaling during viral entry, representing a means by which the alphaviruses may evade innate immune detection and activation prior to viral gene expression. Inhibits host transcription. Forms a tetrameric complex with XPO1/CRM1 and the nuclear import receptor importin. This complex blocks the central channel of host nuclear pores thereby inhibiting the receptor-mediated nuclear transport and thus the host mRNA and rRNA transcription. The inhibition of transcription is linked to a cytopathic effect on the host cell. Functionally, provides the signal sequence for the translocation of the precursor of protein E3/E2 to the host endoplasmic reticulum. Furin-cleaved E3 remains associated with spike glycoprotein E1 and mediates pH protection of the latter during the transport via the secretory pathway. After virion release from the host cell, the assembly protein E3 is gradually released in the extracellular space. Its function is as follows. Plays a role in viral attachment to target host cell, by binding to the cell receptor LDLRAD3. Synthesized as a p62 precursor which is processed by furin at the cell membrane just before virion budding, giving rise to E2-E1 heterodimer. The p62-E1 heterodimer is stable, whereas E2-E1 is unstable and dissociate at low pH. p62 is processed at the last step, presumably to avoid E1 fusion activation before its final export to cell surface. E2 C-terminus contains a transitory transmembrane that would be disrupted by palmitoylation, resulting in reorientation of the C-terminal tail from lumenal to cytoplasmic side. This step is critical since E2 C-terminus is involved in budding by interacting with capsid proteins. This release of E2 C-terminus in cytoplasm occurs lately in protein export, and precludes premature assembly of particles at the endoplasmic reticulum membrane. In terms of biological role, acts as a viroporin that participates in virus glycoprotein processing and transport to the plasma membrane, cell permeabilization and budding of viral particles. Disrupts the calcium homeostasis of the cell, probably at the endoplasmic reticulum level. This leads to cytoplasmic calcium elevation. Because of its lipophilic properties, the 6K protein is postulated to influence the selection of lipids that interact with the transmembrane domains of the glycoproteins, which, in turn, affects the deformability of the bilayer required for the extreme curvature that occurs as budding proceeds. Present in low amount in virions, about 3% compared to viral glycoproteins. Class II viral fusion protein. Fusion activity is inactive as long as E1 is bound to E2 in mature virion. After virus attachment to cell receptor LDLRAD3 and endocytosis, acidification of the endosome induce dissociation of E1/E2 heterodimer and concomitant trimerization of the E1 subunits. This E1 trimer is fusion active, and promotes release of viral nucleocapsid in cytoplasm after endosome and viral membrane fusion. Efficient fusion requires the presence of cholesterol and sphingolipid in the target membrane. This Venezuelan equine encephalitis virus (strain P676) (VEEV) protein is Structural polyprotein.